The primary structure comprises 1170 residues: RNA-binding protein 33 (1170 aa).

Disordered regions lie at residues 1–152 and 199–221; these read MAAA…EGHE and KDIK…LRFK. Ala-2 bears the N-acetylalanine mark. A compositionally biased stretch (basic and acidic residues) spans 20–36; it reads QFDKPGAERSWRRRAAD. A compositionally biased stretch (acidic residues) spans 37 to 49; it reads EDWDSELEDDLLG. Ser-41 is modified (phosphoserine). Residues 82–108 show a composition bias toward polar residues; it reads FSSQGVTISLNATSGMVTSFELSDNTN. 2 stretches are compositionally biased toward acidic residues: residues 112-126 and 203-214; these read GEQE…GEDE and EESDEEEEDDEE. Phosphoserine is present on residues Ser-205 and Ser-233. 4 disordered regions span residues 259–708, 721–784, 833–863, and 942–1050; these read FEER…NSNL, MSSS…PDED, QLYA…PFPG, and AVPQ…VPPG. Over residues 267-278 the composition is skewed to basic residues; that stretch reads KQGRYSSRRGGR. Residues 289–306 show a composition bias toward basic and acidic residues; it reads GDQRRESTERGRMKDHRP. Over residues 311–329 the composition is skewed to pro residues; that stretch reads TQPPVVPQAPPPPPPPPQQ. Composition is skewed to low complexity over residues 335–348, 357–372, and 394–403; these read LFQP…LPVQ, QGMH…RMMM, and TVVTPVQVPL. Positions 419–433 are enriched in pro residues; sequence FPGPPEFPQHTPGPV. Arg-470 carries the asymmetric dimethylarginine modification. Composition is skewed to pro residues over residues 481–490, 554–568, and 582–630; these read SPPPPPPPPT, FIPP…PGQP, and LHPP…PQHP. Basic residues predominate over residues 632-642; that stretch reads QHQHHHHHHHL. Polar residues-rich tracts occupy residues 662-708 and 721-732; these read QTAQ…NSNL and MSSSRCSATPSA. Ser-741 and Ser-765 each carry phosphoserine. The stretch at 789-835 forms a coiled coil; sequence LYRLKIEEQKRLREEILKQKELRRQQQAGARKKELLERLAQQQQQLY. A Phosphoserine modification is found at Ser-951. Lys-960 is covalently cross-linked (Glycyl lysine isopeptide (Lys-Gly) (interchain with G-Cter in SUMO2)). Ser-973 and Ser-991 each carry phosphoserine. An Asymmetric dimethylarginine; alternate modification is found at Arg-1028. Arg-1028 is modified (omega-N-methylarginine; alternate). Residues 1098 to 1170 form the RRM domain; that stretch reads CVVSVEGLSS…SHINVALIVE (73 aa).

Associates with the NXF1-NXT1 RNA export complex. Interacts with ALKBH5; facilitating ALKBH5 recruitment to m6A-containing transcripts. Interacts with SENP1; promoting ALKBH5 deSUMOylation and subsequent activation.

It is found in the nucleus. The protein resides in the cytoplasm. Its function is as follows. RNA reader protein, which recognizes and binds specific RNAs, thereby regulating RNA metabolic processes, such as mRNA export, mRNA stability and/or translation. Binds a subset of intronless RNAs containing GC-rich elements, such as NORAD, and promotes their nuclear export by recruiting target RNAs to components of the NXF1-NXT1 RNA export machinery. Specifically recognizes and binds N6-methyladenosine (m6A)-containing mRNAs, promoting their demethylation by ALKBH5. Acts as an molecular adapter, which (1) promotes ALKBH5 recruitment to m6A-containing transcripts and (2) activates ALKBH5 demethylase activity by recruiting SENP1, leading to ALKBH5 deSUMOylation and subsequent activation. This is RNA-binding protein 33 from Homo sapiens (Human).